A 452-amino-acid polypeptide reads, in one-letter code: Cell division protein FtsZ (452 aa).

GTP-binding positions include 24–28 (GAGSN), 111–113 (GTG), E142, R146, and D190.

Belongs to the FtsZ family. Homodimer. Polymerizes to form a dynamic ring structure in a strictly GTP-dependent manner. Interacts directly with several other division proteins.

Its subcellular location is the cytoplasm. Its function is as follows. Essential cell division protein that forms a contractile ring structure (Z ring) at the future cell division site. The regulation of the ring assembly controls the timing and the location of cell division. One of the functions of the FtsZ ring is to recruit other cell division proteins to the septum to produce a new cell wall between the dividing cells. Binds GTP and shows GTPase activity. The protein is Cell division protein FtsZ of Rickettsia felis (strain ATCC VR-1525 / URRWXCal2) (Rickettsia azadi).